A 397-amino-acid chain; its full sequence is T-box transcription factor TBX19 (397 aa).

A DNA-binding region (T-box) is located at residues 48–216 (LWQRFREVTN…YNPFAKAFLD (169 aa)). The tract at residues 220–248 (RNHPKDAPEAASEGQHMTYSHSPQAPHGC) is disordered.

It localises to the nucleus. In terms of biological role, may be involved in the initial formation of the chordamesoderm. This chain is T-box transcription factor TBX19, found in Gallus gallus (Chicken).